We begin with the raw amino-acid sequence, 255 residues long: MERWRDRLALVTGASGGIGAAVARALVQQGLKVVGCARTVGNIEELAAECKSAGYPGTLIPYRCDLSNEEDILSMFSAVRSQHSGVDICINNAGLARPDTLLSGSTSGWKEMFNVNVLALSICTREACQSMRERKVDDGHIININSMCGHRVPPPAETHFYSATKYAVTALTEGLRQELREARSHIRATCISPGVVETQFAFKLHDKDPEKAAATYEHMKCLKPEDVAEAVIYVLSTPPHVQIGDIQMRPTEQVT.

Residues 1-25 (MERWRDRLALVTGASGGIGAAVARA) form the signal peptide. NADP(+) is bound by residues 13 to 18 (GASGGI), 38 to 39 (RT), E44, 65 to 66 (DL), and N92. Substrate-binding residues include S146 and Y161. NADP(+)-binding positions include Y161, K165, 196 to 199 (VETQ), and K203. The active-site Proton acceptor is Y161.

It belongs to the short-chain dehydrogenases/reductases (SDR) family.

It localises to the secreted. The catalysed reaction is a 3beta-hydroxysteroid + NADP(+) = a 3-oxosteroid + NADPH + H(+). It catalyses the reaction 17beta-estradiol + NAD(+) = estrone + NADH + H(+). It carries out the reaction 17beta-estradiol + NADP(+) = estrone + NADPH + H(+). It participates in steroid biosynthesis; estrogen biosynthesis. Inhibited by flavonoids including apigenin, luteolin, genistein, kaempferol and quercetin and also by carbenoxolone, zearalenone, glycyrrhetinic, curcumin and flufenamic acid. Its function is as follows. Catalyzes the conversion of the 17-keto group of estrone, 4- and 5-androstenes and 5-alpha-androstanes into their 17-beta-hydroxyl metabolites and the conversion of the 3-keto group of 3-, 3,17- and 3,20- diketosteroids into their 3-hydroxyl metabolites. Exhibits reductive 3-beta-hydroxysteroid dehydrogenase activity toward 5-beta-androstanes, 5-beta-pregnanes, 4-pregnenes and bile acids. May also reduce endogenous and exogenous alpha-dicarbonyl compounds and xenobiotic alicyclic ketones. This chain is Dehydrogenase/reductase SDR family member 11 (DHRS11), found in Bos taurus (Bovine).